We begin with the raw amino-acid sequence, 295 residues long: sn-glycerol-3-phosphate transport system permease protein UgpA (295 aa).

Residues 1 to 11 (MSSSRPVFRSR) are Cytoplasmic-facing. Residues 12–32 (WLPYLLVAPQLIITVIFFIWP) form a helical membrane-spanning segment. Residues 33–80 (AGEALWYSLQSVDPFGFSSQFVGLDNFVTLFHDSYYLDSFWTTIKFST) are Periplasmic-facing. One can recognise an ABC transmembrane type-1 domain in the interval 76–284 (IKFSTFVTVS…FLVIVLTVVQ (209 aa)). Residues 81–101 (FVTVSGLLVSLFFAALVEYIV) form a helical membrane-spanning segment. Residues 102 to 109 (RGSRFYQT) are Cytoplasmic-facing. Residues 110–130 (LMLLPYAVAPAVAAVLWIFLF) form a helical membrane-spanning segment. At 131–156 (NPGRGLITHFLAEFGYDWNHAQNSGQ) the chain is on the periplasmic side. Residues 157 to 177 (AMFLVVFASVWKQISYNFLFF) traverse the membrane as a helical segment. Residues 178–207 (YAALQSIPRSLIEAAAIDGAGPIRRFFKIA) are Cytoplasmic-facing. Residues 208-228 (LPLIAPVSFFLLVVNLVYAFF) traverse the membrane as a helical segment. Topologically, residues 229 to 262 (DTFPVIDAATSGGPVQATTTLIYKIYREGFTGLD) are periplasmic. The helical transmembrane segment at 263–283 (LASSAAQSMVLMFLVIVLTVV) threads the bilayer. The Cytoplasmic portion of the chain corresponds to 284 to 295 (QFRYVESKVRYQ).

Belongs to the binding-protein-dependent transport system permease family. UgpAE subfamily. In terms of assembly, the complex is composed of two ATP-binding proteins (UgpC), two transmembrane proteins (UgpA and UgpE) and a solute-binding protein (UgpB).

It localises to the cell inner membrane. Its function is as follows. Part of the ABC transporter complex UgpBAEC involved in sn-glycerol-3-phosphate (G3P) import. Probably responsible for the translocation of the substrate across the membrane. The protein is sn-glycerol-3-phosphate transport system permease protein UgpA (ugpA) of Shigella flexneri.